Consider the following 224-residue polypeptide: PHD finger-containing protein 5 (224 aa).

Residues 31 to 81 (KKPCEVCGSDANELLMMTCFMCRDTREHTYCARVMFQRVPRLWICEECRDF) form a PHD-type zinc finger. Positions 34, 37, 49, 52, 58, 61, 75, and 78 each coordinate Zn(2+). A disordered region spans residues 116 to 137 (PRTNQVVDNHQDPPIDQTDPSS).

In terms of assembly, interacts directly with AIPP3/BDT1.

Together with AIPP3/BDT1, cooperates to form a BAH-PHD bivalent histone reader complex able to read histone H3 lysine 27 trimethylation (H3K27me3) histone marks in order to regulate transcription, especially to prevent early flowering; promotes AIPP3/BDT1 binding to H3K27me3. The protein is PHD finger-containing protein 5 of Arabidopsis thaliana (Mouse-ear cress).